Reading from the N-terminus, the 308-residue chain is Ribosomal RNA small subunit methyltransferase H (308 aa).

S-adenosyl-L-methionine-binding positions include 33–35 (GGH), Asp-52, Tyr-81, Asp-99, and Gln-106.

This sequence belongs to the methyltransferase superfamily. RsmH family.

The protein resides in the cytoplasm. The catalysed reaction is cytidine(1402) in 16S rRNA + S-adenosyl-L-methionine = N(4)-methylcytidine(1402) in 16S rRNA + S-adenosyl-L-homocysteine + H(+). Specifically methylates the N4 position of cytidine in position 1402 (C1402) of 16S rRNA. The sequence is that of Ribosomal RNA small subunit methyltransferase H from Francisella philomiragia subsp. philomiragia (strain ATCC 25017 / CCUG 19701 / FSC 153 / O#319-036).